The following is a 105-amino-acid chain: Ketoisovalerate oxidoreductase subunit VorD (105 aa).

4Fe-4S ferredoxin-type domains are found at residues 44 to 73 (FMPVIDESKCVKCYICWKYCPEPAIYIKED) and 74 to 103 (GFVAIDYDYCKGCGICANECPTKAITMVRE). Positions 53, 56, 59, 63, 83, 86, 89, and 93 each coordinate [4Fe-4S] cluster.

As to quaternary structure, heterotetramer of one alpha, one beta, one delta and one gamma chain. The cofactor is [4Fe-4S] cluster.

The catalysed reaction is 3-methyl-2-oxobutanoate + 2 oxidized [2Fe-2S]-[ferredoxin] + CoA = 2-methylpropanoyl-CoA + 2 reduced [2Fe-2S]-[ferredoxin] + CO2 + H(+). The polypeptide is Ketoisovalerate oxidoreductase subunit VorD (vorD) (Pyrococcus horikoshii (strain ATCC 700860 / DSM 12428 / JCM 9974 / NBRC 100139 / OT-3)).